We begin with the raw amino-acid sequence, 426 residues long: Dihydroorotase (426 aa).

2 residues coordinate Zn(2+): His61 and His63. Residues 63–65 (HCR) and Asn95 contribute to the substrate site. Residues Glu146, His180, His229, and Asp297 each coordinate Zn(2+). Asp297 is a catalytic residue. His301 contributes to the substrate binding site.

It belongs to the metallo-dependent hydrolases superfamily. DHOase family. Class I DHOase subfamily. Requires Zn(2+) as cofactor.

It carries out the reaction (S)-dihydroorotate + H2O = N-carbamoyl-L-aspartate + H(+). It participates in pyrimidine metabolism; UMP biosynthesis via de novo pathway; (S)-dihydroorotate from bicarbonate: step 3/3. Functionally, catalyzes the reversible cyclization of carbamoyl aspartate to dihydroorotate. The sequence is that of Dihydroorotase from Methanopyrus kandleri (strain AV19 / DSM 6324 / JCM 9639 / NBRC 100938).